A 208-amino-acid chain; its full sequence is MSSLGFSVGTCSPPSEKRKCRFLVNNSLNKAEAINLRNKQKVSSDPELSFAQLSSCGRREAIIGFGFSIGLLDNVSALAETTSCEFSVSPSGLAFCDKVVGYGPEAVKGQLIKAHYVGKLENGKVFDSSYNRGKPLTFRIGVGEVIKGWDQGILGSDGIPPMLTGGKRTLRIPPELAYGDRGAGCKGGSCLIPPASVLLFDIEYIGKA.

Intrachain disulfides connect Cys-84–Cys-96 and Cys-185–Cys-190. One can recognise a PPIase FKBP-type domain in the interval 109-208 (GQLIKAHYVG…LFDIEYIGKA (100 aa)).

This sequence belongs to the FKBP-type PPIase family. As to quaternary structure, interacts in vitro with LTO1. The precursor, but not the mature form of the protein, interacts with the Rieske protein. Expressed in stems, leaves and developing flower buds, but not in roots.

Its subcellular location is the plastid. The protein localises to the chloroplast thylakoid lumen. The catalysed reaction is [protein]-peptidylproline (omega=180) = [protein]-peptidylproline (omega=0). Its activity is regulated as follows. PPIase activity is optimal in oxidized form (S-S) and minimal in reduced form (SH). Reduction of the oxidized form is mediated by thioredoxin (TRX-M). Its function is as follows. PPIases accelerate the folding of proteins. It catalyzes the cis-trans isomerization of proline imidic peptide bonds in oligopeptides. Responsive of the major PPIase activity in the chloroplast thylakoid lumen. Regulates the accumulation of Rieske protein, an essential component of the photosynthetic electron transport chain. This chain is Peptidyl-prolyl cis-trans isomerase FKBP13, chloroplastic, found in Arabidopsis thaliana (Mouse-ear cress).